The primary structure comprises 333 residues: Acetoin:2,6-dichlorophenolindophenol oxidoreductase subunit alpha (333 aa).

In terms of assembly, tetramer of 2 alpha and 2 beta subunits. Requires thiamine diphosphate as cofactor.

The protein operates within ketone degradation; acetoin degradation. In terms of biological role, catalyzes the 2,6-dichlorophenolindophenol-dependent cleavage of acetoin into acetate and acetaldehyde, in vitro. The alpha subunit is probably the catalytic subunit of the enzyme. The chain is Acetoin:2,6-dichlorophenolindophenol oxidoreductase subunit alpha (acoA) from Cupriavidus necator (strain ATCC 17699 / DSM 428 / KCTC 22496 / NCIMB 10442 / H16 / Stanier 337) (Ralstonia eutropha).